A 602-amino-acid chain; its full sequence is Alpha-glucosides permease MPH3 (602 aa).

Topologically, residues Met-1–Thr-106 are cytoplasmic. Residues Thr-107–Phe-127 form a helical membrane-spanning segment. Residues Gln-128–Glu-142 are Extracellular-facing. A helical membrane pass occupies residues Ile-143–Leu-163. Topologically, residues Gln-164–Thr-178 are cytoplasmic. The helical transmembrane segment at Leu-179–Leu-199 threads the bilayer. Residue Gly-200 is a topological domain, extracellular. The helical transmembrane segment at Met-201–Val-221 threads the bilayer. The Cytoplasmic segment spans residues Ser-222–Tyr-234. A helical transmembrane segment spans residues Tyr-235–Met-255. Residues Lys-256 to Lys-270 are Extracellular-facing. Residues Leu-271–Pro-291 traverse the membrane as a helical segment. Over Glu-292 to Arg-363 the chain is Cytoplasmic. The chain crosses the membrane as a helical span at residues Ile-364 to Thr-384. Topologically, residues Tyr-385–Ser-397 are extracellular. Residues Phe-398–Ala-418 traverse the membrane as a helical segment. Over Ser-419–Asp-426 the chain is Cytoplasmic. The helical transmembrane segment at Leu-427–Cys-447 threads the bilayer. The Extracellular portion of the chain corresponds to Ser-448–Ser-459. The chain crosses the membrane as a helical span at residues Leu-460 to Val-480. Over Ser-481–Thr-492 the chain is Cytoplasmic. The helical transmembrane segment at Ile-493–Tyr-513 threads the bilayer. Residues Gln-514–Lys-525 are Extracellular-facing. The chain crosses the membrane as a helical span at residues Ser-526–Pro-546. Over Glu-547 to Glu-602 the chain is Cytoplasmic. Residues Lys-580 to Glu-602 are disordered. Over residues Pro-582–Ile-595 the composition is skewed to basic and acidic residues.

Belongs to the major facilitator superfamily. Sugar transporter (TC 2.A.1.1) family.

It localises to the cell membrane. Its function is as follows. High-affinity uptake of maltose and maltotriose. Also transports alpha-methylglucoside, glucose and turanose but not melezitose or trehalose. This is Alpha-glucosides permease MPH3 (MPH3) from Saccharomyces cerevisiae (strain AWRI1631) (Baker's yeast).